The following is a 289-amino-acid chain: CCR4-associated factor 16 (289 aa).

Positions 7-249 (IEVRNLTYKF…SEVVNAKVNG (243 aa)) constitute an ABC transporter domain. An ATP-binding site is contributed by 41 to 48 (GANGAGKS).

Belongs to the ABC transporter superfamily. Interacts with CCR4 and SSN2.

Its subcellular location is the cytoplasm. It localises to the nucleus. The polypeptide is CCR4-associated factor 16 (CAF16) (Saccharomyces cerevisiae (strain ATCC 204508 / S288c) (Baker's yeast)).